We begin with the raw amino-acid sequence, 283 residues long: Phosphatidylserine decarboxylase proenzyme (283 aa).

Residues Asp-88, His-145, and Ser-248 each act as charge relay system; for autoendoproteolytic cleavage activity in the active site. Catalysis depends on Ser-248, which acts as the Schiff-base intermediate with substrate; via pyruvic acid; for decarboxylase activity. Pyruvic acid (Ser); by autocatalysis is present on Ser-248.

Belongs to the phosphatidylserine decarboxylase family. PSD-B subfamily. Prokaryotic type I sub-subfamily. As to quaternary structure, heterodimer of a large membrane-associated beta subunit and a small pyruvoyl-containing alpha subunit. It depends on pyruvate as a cofactor. In terms of processing, is synthesized initially as an inactive proenzyme. Formation of the active enzyme involves a self-maturation process in which the active site pyruvoyl group is generated from an internal serine residue via an autocatalytic post-translational modification. Two non-identical subunits are generated from the proenzyme in this reaction, and the pyruvate is formed at the N-terminus of the alpha chain, which is derived from the carboxyl end of the proenzyme. The autoendoproteolytic cleavage occurs by a canonical serine protease mechanism, in which the side chain hydroxyl group of the serine supplies its oxygen atom to form the C-terminus of the beta chain, while the remainder of the serine residue undergoes an oxidative deamination to produce ammonia and the pyruvoyl prosthetic group on the alpha chain. During this reaction, the Ser that is part of the protease active site of the proenzyme becomes the pyruvoyl prosthetic group, which constitutes an essential element of the active site of the mature decarboxylase.

The protein resides in the cell membrane. It catalyses the reaction a 1,2-diacyl-sn-glycero-3-phospho-L-serine + H(+) = a 1,2-diacyl-sn-glycero-3-phosphoethanolamine + CO2. The protein operates within phospholipid metabolism; phosphatidylethanolamine biosynthesis; phosphatidylethanolamine from CDP-diacylglycerol: step 2/2. Catalyzes the formation of phosphatidylethanolamine (PtdEtn) from phosphatidylserine (PtdSer). The chain is Phosphatidylserine decarboxylase proenzyme from Variovorax paradoxus (strain S110).